A 212-amino-acid chain; its full sequence is 3-oxo-tetronate 4-phosphate decarboxylase (212 aa).

Residue glutamate 79 is the Proton acceptor of the active site. Positions 79, 98, and 100 each coordinate Zn(2+). Tyrosine 125 serves as the catalytic Proton donor. A Zn(2+)-binding site is contributed by histidine 165.

It belongs to the aldolase class II family. AraD/FucA subfamily. Zn(2+) serves as cofactor.

The enzyme catalyses 3-dehydro-4-O-phospho-D-erythronate + H(+) = dihydroxyacetone phosphate + CO2. It carries out the reaction 3-dehydro-4-O-phospho-L-erythronate + H(+) = dihydroxyacetone phosphate + CO2. Functionally, catalyzes the decarboxylation of 3-oxo-tetronate 4-phosphate to dihydroxyacetone phosphate (DHAP) and CO(2). This chain is 3-oxo-tetronate 4-phosphate decarboxylase, found in Escherichia coli (strain K12).